The sequence spans 343 residues: Small ribosomal subunit biogenesis GTPase RsgA (343 aa).

Residues 116 to 275 (HGQLKPVAAN…LIDSPGIREF (160 aa)) enclose the CP-type G domain. GTP is bound by residues 163 to 166 (NKAD) and 217 to 225 (GQSGVGKSS). Zn(2+)-binding residues include Cys-299, Cys-304, His-306, and Cys-312.

This sequence belongs to the TRAFAC class YlqF/YawG GTPase family. RsgA subfamily. Monomer. Associates with 30S ribosomal subunit, binds 16S rRNA. Zn(2+) is required as a cofactor.

Its subcellular location is the cytoplasm. In terms of biological role, one of several proteins that assist in the late maturation steps of the functional core of the 30S ribosomal subunit. Helps release RbfA from mature subunits. May play a role in the assembly of ribosomal proteins into the subunit. Circularly permuted GTPase that catalyzes slow GTP hydrolysis, GTPase activity is stimulated by the 30S ribosomal subunit. The sequence is that of Small ribosomal subunit biogenesis GTPase RsgA from Pseudomonas putida (strain ATCC 700007 / DSM 6899 / JCM 31910 / BCRC 17059 / LMG 24140 / F1).